Consider the following 402-residue polypeptide: MANAYGFVGHSVPTMKRAAQFQQMGSGFCSADSISKRVFCCSVVQGADKPASGDSRTEYRTPRLVSRGCKLVGSGSAMPALQVSNDDLSKIVDTNDEWISVRTGIRNRRVLTGKESLTNLATVAARKALEMAQVDANDVDMVLMCTSTPEDLFGSAPQIQKALGCKKNPLAYDITAACSGFVLGLVSAACHIRGGGFNNILVIGADSLSRYVDWTDRGTCILFGDAAGAVLVQSCDAEEDGLFAFDLHSDGDGQRHLKAAITENGIDHAVGSNGSVSDFPPRSSSYSCIQMNGKEVFRFACRCVPQSIESALGKAGLNGSNIDWLLLHQANQRIIDAVATRLEVPQERVISNLANYGNTSAASIPLALDEAVRGGKVKAGHLIATAGFGAGLTWGSAIVRWG.

Residues Cys-178, His-328, and Asn-358 contribute to the active site.

The protein belongs to the thiolase-like superfamily. FabH family.

It localises to the plastid. It is found in the chloroplast. The enzyme catalyses malonyl-[ACP] + acetyl-CoA + H(+) = 3-oxobutanoyl-[ACP] + CO2 + CoA. It functions in the pathway lipid metabolism; fatty acid biosynthesis. In terms of biological role, catalyzes the condensation reaction of fatty acid synthesis by the addition to an acyl acceptor of two carbons from malonyl-ACP. KAS III catalyzes the first condensation reaction which initiates fatty acid synthesis and may therefore play a role in governing the total rate of fatty acid production. Possesses both acetoacetyl-ACP synthase and acetyl transacylase activities. This chain is Beta-ketoacyl-[acyl-carrier-protein] synthase III B, chloroplastic (KAS3B), found in Cuphea wrightii (Wright's waxweed).